The following is a 381-amino-acid chain: L-lactate dehydrogenase (381 aa).

In terms of domain architecture, FMN hydroxy acid dehydrogenase spans 1–380; the sequence is MIISASTDYR…SADSLVRELG (380 aa). Residue tyrosine 24 participates in substrate binding. FMN-binding residues include serine 106 and glutamine 127. Tyrosine 129 is a binding site for substrate. FMN is bound at residue threonine 155. A substrate-binding site is contributed by arginine 164. Lysine 251 contributes to the FMN binding site. Residue histidine 275 is the Proton acceptor of the active site. Arginine 278 serves as a coordination point for substrate. Residue 306–330 coordinates FMN; sequence DSGIRTGLDVVRMIALGADSVLLGR.

It belongs to the FMN-dependent alpha-hydroxy acid dehydrogenase family. As to quaternary structure, homotetramer. Requires FMN as cofactor.

It localises to the cell inner membrane. The catalysed reaction is (S)-lactate + A = pyruvate + AH2. Catalyzes the conversion of L-lactate to pyruvate. Is coupled to the respiratory chain. The sequence is that of L-lactate dehydrogenase from Pseudomonas paraeruginosa (strain DSM 24068 / PA7) (Pseudomonas aeruginosa (strain PA7)).